A 183-amino-acid chain; its full sequence is UPF0302 protein BH1670 (183 aa).

This sequence belongs to the UPF0302 family.

This is UPF0302 protein BH1670 from Halalkalibacterium halodurans (strain ATCC BAA-125 / DSM 18197 / FERM 7344 / JCM 9153 / C-125) (Bacillus halodurans).